The chain runs to 128 residues: Fluoride-specific ion channel FluC (128 aa).

Transmembrane regions (helical) follow at residues 5 to 25, 34 to 54, 67 to 87, and 99 to 119; these read LFIS…GLLF, FGTL…LGLF, FLIT…SEVV, and FCVL…GIWI. Na(+)-binding residues include Gly-74 and Thr-77.

It belongs to the fluoride channel Fluc/FEX (TC 1.A.43) family.

The protein localises to the cell inner membrane. The catalysed reaction is fluoride(in) = fluoride(out). With respect to regulation, na(+) is not transported, but it plays an essential structural role and its presence is essential for fluoride channel function. Functionally, fluoride-specific ion channel. Important for reducing fluoride concentration in the cell, thus reducing its toxicity. The chain is Fluoride-specific ion channel FluC from Haemophilus influenzae (strain PittGG).